The primary structure comprises 156 residues: ATP synthase subunit b (156 aa).

Residues L7–P27 form a helical membrane-spanning segment.

Belongs to the ATPase B chain family. As to quaternary structure, F-type ATPases have 2 components, F(1) - the catalytic core - and F(0) - the membrane proton channel. F(1) has five subunits: alpha(3), beta(3), gamma(1), delta(1), epsilon(1). F(0) has three main subunits: a(1), b(2) and c(10-14). The alpha and beta chains form an alternating ring which encloses part of the gamma chain. F(1) is attached to F(0) by a central stalk formed by the gamma and epsilon chains, while a peripheral stalk is formed by the delta and b chains.

Its subcellular location is the cell inner membrane. F(1)F(0) ATP synthase produces ATP from ADP in the presence of a proton or sodium gradient. F-type ATPases consist of two structural domains, F(1) containing the extramembraneous catalytic core and F(0) containing the membrane proton channel, linked together by a central stalk and a peripheral stalk. During catalysis, ATP synthesis in the catalytic domain of F(1) is coupled via a rotary mechanism of the central stalk subunits to proton translocation. In terms of biological role, component of the F(0) channel, it forms part of the peripheral stalk, linking F(1) to F(0). The chain is ATP synthase subunit b from Paracidovorax citrulli (strain AAC00-1) (Acidovorax citrulli).